The primary structure comprises 231 residues: Ribose-5-phosphate isomerase A (231 aa).

Substrate-binding positions include 23 to 26 (SGST), 80 to 83 (DGAD), and 93 to 96 (KGGG). Residue Glu102 is the Proton acceptor of the active site. Position 120 (Lys120) interacts with substrate.

Belongs to the ribose 5-phosphate isomerase family. In terms of assembly, homodimer.

The enzyme catalyses aldehydo-D-ribose 5-phosphate = D-ribulose 5-phosphate. Its pathway is carbohydrate degradation; pentose phosphate pathway; D-ribose 5-phosphate from D-ribulose 5-phosphate (non-oxidative stage): step 1/1. In terms of biological role, catalyzes the reversible conversion of ribose-5-phosphate to ribulose 5-phosphate. This chain is Ribose-5-phosphate isomerase A, found in Prochlorococcus marinus subsp. pastoris (strain CCMP1986 / NIES-2087 / MED4).